Consider the following 137-residue polypeptide: Large ribosomal subunit protein eL28 (137 aa).

N-acetylserine is present on Ser2. Glycyl lysine isopeptide (Lys-Gly) (interchain with G-Cter in SUMO2) cross-links involve residues Lys58 and Lys65. Position 115 is a phosphoserine (Ser115).

Belongs to the eukaryotic ribosomal protein eL28 family. As to quaternary structure, component of the large ribosomal subunit.

The protein resides in the cytoplasm. Component of the large ribosomal subunit. The ribosome is a large ribonucleoprotein complex responsible for the synthesis of proteins in the cell. The protein is Large ribosomal subunit protein eL28 (RPL28) of Bos taurus (Bovine).